Here is a 296-residue protein sequence, read N- to C-terminus: Bifunctional protein FolD (296 aa).

NADP(+) is bound by residues 166–168 (GRS), Ser-195, and Thr-236.

Belongs to the tetrahydrofolate dehydrogenase/cyclohydrolase family. As to quaternary structure, homodimer.

It catalyses the reaction (6R)-5,10-methylene-5,6,7,8-tetrahydrofolate + NADP(+) = (6R)-5,10-methenyltetrahydrofolate + NADPH. It carries out the reaction (6R)-5,10-methenyltetrahydrofolate + H2O = (6R)-10-formyltetrahydrofolate + H(+). It functions in the pathway one-carbon metabolism; tetrahydrofolate interconversion. Catalyzes the oxidation of 5,10-methylenetetrahydrofolate to 5,10-methenyltetrahydrofolate and then the hydrolysis of 5,10-methenyltetrahydrofolate to 10-formyltetrahydrofolate. The polypeptide is Bifunctional protein FolD (Dehalococcoides mccartyi (strain ATCC BAA-2266 / KCTC 15142 / 195) (Dehalococcoides ethenogenes (strain 195))).